Reading from the N-terminus, the 91-residue chain is Cell division protein FtsB (91 aa).

At 1-3 (MKF) the chain is on the cytoplasmic side. Residues 4 to 21 (IVGLLLVLLLALQYQLWI) traverse the membrane as a helical segment. The Periplasmic segment spans residues 22–91 (SKDGLGELRQ…ETFFQVVEEP (70 aa)). Residues 26-74 (LGELRQLSRSIKQQRHENATLIERNQVLKAEVQDLKSGLDALEERARSG) are a coiled coil.

This sequence belongs to the FtsB family. As to quaternary structure, part of a complex composed of FtsB, FtsL and FtsQ.

Its subcellular location is the cell inner membrane. Its function is as follows. Essential cell division protein. May link together the upstream cell division proteins, which are predominantly cytoplasmic, with the downstream cell division proteins, which are predominantly periplasmic. In Nitrosococcus oceani (strain ATCC 19707 / BCRC 17464 / JCM 30415 / NCIMB 11848 / C-107), this protein is Cell division protein FtsB.